Reading from the N-terminus, the 329-residue chain is DNA-directed RNA polymerase subunit alpha (329 aa).

Residues 1-235 (MQGSVTEFLK…EQLDAFVDLR (235 aa)) form an alpha N-terminal domain (alpha-NTD) region. The interval 249–329 (FDPILLRPVD…NWPPASIAED (81 aa)) is alpha C-terminal domain (alpha-CTD).

Belongs to the RNA polymerase alpha chain family. In terms of assembly, homodimer. The RNAP catalytic core consists of 2 alpha, 1 beta, 1 beta' and 1 omega subunit. When a sigma factor is associated with the core the holoenzyme is formed, which can initiate transcription.

It catalyses the reaction RNA(n) + a ribonucleoside 5'-triphosphate = RNA(n+1) + diphosphate. Functionally, DNA-dependent RNA polymerase catalyzes the transcription of DNA into RNA using the four ribonucleoside triphosphates as substrates. The protein is DNA-directed RNA polymerase subunit alpha of Aliivibrio salmonicida (strain LFI1238) (Vibrio salmonicida (strain LFI1238)).